Consider the following 360-residue polypeptide: sn-glycerol-3-phosphate import ATP-binding protein UgpC (360 aa).

In terms of domain architecture, ABC transporter spans 4–235 (LSLKGVRKSY…PATTFVASFI (232 aa)). 37–44 (GPSGCGKS) provides a ligand contact to ATP.

It belongs to the ABC transporter superfamily. sn-glycerol-3-phosphate importer (TC 3.A.1.1.3) family. The complex is composed of two ATP-binding proteins (UgpC), two transmembrane proteins (UgpA and UgpE) and a solute-binding protein (UgpB).

It is found in the cell inner membrane. It carries out the reaction sn-glycerol 3-phosphate(out) + ATP + H2O = sn-glycerol 3-phosphate(in) + ADP + phosphate + H(+). Functionally, part of the ABC transporter complex UgpBAEC involved in sn-glycerol-3-phosphate (G3P) import. Responsible for energy coupling to the transport system. This Burkholderia pseudomallei (strain K96243) protein is sn-glycerol-3-phosphate import ATP-binding protein UgpC.